The primary structure comprises 108 residues: Small ribosomal subunit protein bS18 (108 aa).

Residues 1–12 (MSDITKQPANNI) are compositionally biased toward polar residues. The interval 1–33 (MSDITKQPANNISSDDKKEVAKASAKSSVEGAK) is disordered.

This sequence belongs to the bacterial ribosomal protein bS18 family. Part of the 30S ribosomal subunit. Forms a tight heterodimer with protein bS6.

Its function is as follows. Binds as a heterodimer with protein bS6 to the central domain of the 16S rRNA, where it helps stabilize the platform of the 30S subunit. This is Small ribosomal subunit protein bS18 from Mycoplasmoides gallisepticum (strain R(low / passage 15 / clone 2)) (Mycoplasma gallisepticum).